Here is a 538-residue protein sequence, read N- to C-terminus: Mevalonate kinase erg12 (538 aa).

The tract at residues 1 to 87 is disordered; sequence MGNPRGRRTN…RNMSRKPSSP (87 aa). Residues 9–29 show a composition bias toward polar residues; sequence TNGSIKTSKGTQRGTVSNLLS. A compositionally biased stretch (low complexity) spans 57 to 69; that stretch reads TTPSTTESTLKTT. ATP is bound by residues Lys-99, Ser-231, and 236-242; that span reads GAGLGSS. Mg(2+) contacts are provided by Ser-242 and Glu-287. Asp-298 (proton acceptor) is an active-site residue.

The protein belongs to the GHMP kinase family. Mevalonate kinase subfamily. Homodimer. Mg(2+) serves as cofactor.

It localises to the cytoplasm. The protein localises to the cytosol. The enzyme catalyses (R)-mevalonate + ATP = (R)-5-phosphomevalonate + ADP + H(+). Its pathway is isoprenoid biosynthesis; isopentenyl diphosphate biosynthesis via mevalonate pathway; isopentenyl diphosphate from (R)-mevalonate: step 1/3. Mevalonate kinase; part of the second module of ergosterol biosynthesis pathway that includes the middle steps of the pathway. Erg12 converts mevalonate into 5-phosphomevalonate. The second module is carried out in the vacuole and involves the formation of farnesyl diphosphate, which is also an important intermediate in the biosynthesis of ubiquinone, dolichol, heme and prenylated proteins. Activity by the mevalonate kinase erg12 (AFUA_4G07780) first converts mevalonate into 5-phosphomevalonate. 5-phosphomevalonate is then further converted to 5-diphosphomevalonate by the phosphomevalonate kinase erg8 (AFUA_5G10680). The diphosphomevalonate decarboxylase mvd1 (AFUA_4G07130) then produces isopentenyl diphosphate. The isopentenyl-diphosphate delta-isomerase idi1 (AFUA_6G11160) then catalyzes the 1,3-allylic rearrangement of the homoallylic substrate isopentenyl (IPP) to its highly electrophilic allylic isomer, dimethylallyl diphosphate (DMAPP). Finally the farnesyl diphosphate synthase erg20 (AFUA_5G02450) catalyzes the sequential condensation of isopentenyl pyrophosphate with dimethylallyl pyrophosphate, and then with the resultant geranylpyrophosphate to the ultimate product farnesyl pyrophosphate. The sequence is that of Mevalonate kinase erg12 from Aspergillus fumigatus (strain ATCC MYA-4609 / CBS 101355 / FGSC A1100 / Af293) (Neosartorya fumigata).